The chain runs to 165 residues: Anaerobic nitrite reductase GLB1 (165 aa).

One can recognise a Globin domain in the interval 12–162; sequence VFGEEQEALV…LVAAIKREMK (151 aa). The Homodimerization signature appears at 45-49; it reads EIAPS. 6 residues coordinate heme b: serine 55, lysine 69, histidine 73, arginine 103, threonine 107, and histidine 108. The Homodimerization signature appears at 115 to 127; the sequence is DGHFEVTGFALLE.

It belongs to the plant globin family. In terms of assembly, homodimer. It depends on heme b as a cofactor. In vegetative but not in embryonic organs.

The protein localises to the cytoplasm. It is found in the nucleus. It catalyses the reaction Fe(III)-heme b-[protein] + nitric oxide + H2O = Fe(II)-heme b-[protein] + nitrite + 2 H(+). Functionally, phytoglobin that reduces nitrite to nitric oxide (NO) under anoxic conditions (e.g. during flooding or in waterlogged soil). May not function as an oxygen storage or transport protein. Has an unusually high affinity for O(2) through an hexacoordinate heme iron because of a very low dissociation constant. This Zea mays subsp. parviglumis (Balsas teosinte) protein is Anaerobic nitrite reductase GLB1 (HB).